The primary structure comprises 555 residues: Glucose-6-phosphate isomerase (555 aa).

The active-site Proton donor is Glu355. Catalysis depends on residues His386 and Lys514.

It belongs to the GPI family.

Its subcellular location is the cytoplasm. It catalyses the reaction alpha-D-glucose 6-phosphate = beta-D-fructose 6-phosphate. Its pathway is carbohydrate biosynthesis; gluconeogenesis. The protein operates within carbohydrate degradation; glycolysis; D-glyceraldehyde 3-phosphate and glycerone phosphate from D-glucose: step 2/4. Functionally, catalyzes the reversible isomerization of glucose-6-phosphate to fructose-6-phosphate. The protein is Glucose-6-phosphate isomerase of Buchnera aphidicola subsp. Schizaphis graminum (strain Sg).